Reading from the N-terminus, the 45-residue chain is Large ribosomal subunit protein bL34 (45 aa).

Belongs to the bacterial ribosomal protein bL34 family.

This chain is Large ribosomal subunit protein bL34, found in Leifsonia xyli subsp. xyli (strain CTCB07).